Consider the following 339-residue polypeptide: F420-dependent glucose-6-phosphate dehydrogenase (339 aa).

A coenzyme F420-(gamma-Glu)n-binding site is contributed by D41. The Proton donor role is filled by H42. Residues T78 and 109-110 (TG) contribute to the coenzyme F420-(gamma-Glu)n site. The active-site Proton acceptor is E111. Coenzyme F420-(gamma-Glu)n-binding positions include N114, 177–178 (SG), and 180–181 (AA). Substrate is bound by residues T195, K198, K259, and R283.

This sequence belongs to the F420-dependent glucose-6-phosphate dehydrogenase family. In terms of assembly, homodimer.

The enzyme catalyses oxidized coenzyme F420-(gamma-L-Glu)(n) + D-glucose 6-phosphate + H(+) = 6-phospho-D-glucono-1,5-lactone + reduced coenzyme F420-(gamma-L-Glu)(n). In terms of biological role, catalyzes the coenzyme F420-dependent oxidation of glucose 6-phosphate (G6P) to 6-phosphogluconolactone. This is F420-dependent glucose-6-phosphate dehydrogenase from Nakamurella multipartita (strain ATCC 700099 / DSM 44233 / CIP 104796 / JCM 9543 / NBRC 105858 / Y-104) (Microsphaera multipartita).